Consider the following 528-residue polypeptide: Phosphoenolpyruvate carboxykinase (ATP) (528 aa).

Substrate contacts are provided by Arg56, Tyr192, and Lys198. ATP is bound by residues Lys198, His217, and 233 to 241 (GLSGTGKTT). Mn(2+)-binding residues include Lys198 and His217. Asp254 contributes to the Mn(2+) binding site. 3 residues coordinate ATP: Glu282, Arg319, and Thr444. Position 319 (Arg319) interacts with substrate.

Belongs to the phosphoenolpyruvate carboxykinase (ATP) family. Mn(2+) is required as a cofactor.

Its subcellular location is the cytoplasm. The enzyme catalyses oxaloacetate + ATP = phosphoenolpyruvate + ADP + CO2. It functions in the pathway carbohydrate biosynthesis; gluconeogenesis. In terms of biological role, involved in the gluconeogenesis. Catalyzes the conversion of oxaloacetate (OAA) to phosphoenolpyruvate (PEP) through direct phosphoryl transfer between the nucleoside triphosphate and OAA. The chain is Phosphoenolpyruvate carboxykinase (ATP) from Bacillus anthracis (strain A0248).